A 552-amino-acid chain; its full sequence is Olefin beta-lactone synthetase (552 aa).

ATP is bound by residues Thr182–Lys190, Thr316–Thr321, Asp425, and Arg440.

Belongs to the ATP-dependent AMP-binding enzyme family. Monomer.

The catalysed reaction is a (2R,3S)-2-alkyl-3-hydroxyalkanoate + ATP = a cis-3-alkyl-4-alkyloxetan-2-one + AMP + diphosphate. Its function is as follows. Involved in olefin biosynthesis. Catalyzes the conversion of beta-hydroxy acid substrates to beta-lactones in the presence of ATP. Can use all four stereoisomers of 2-hexyl-3-hydroxydecanoic acid. This is Olefin beta-lactone synthetase from Stenotrophomonas maltophilia (strain K279a).